Reading from the N-terminus, the 472-residue chain is 3-isopropylmalate dehydratase large subunit (472 aa).

[4Fe-4S] cluster is bound by residues C346, C406, and C409.

This sequence belongs to the aconitase/IPM isomerase family. LeuC type 1 subfamily. Heterodimer of LeuC and LeuD. Requires [4Fe-4S] cluster as cofactor.

It catalyses the reaction (2R,3S)-3-isopropylmalate = (2S)-2-isopropylmalate. It participates in amino-acid biosynthesis; L-leucine biosynthesis; L-leucine from 3-methyl-2-oxobutanoate: step 2/4. In terms of biological role, catalyzes the isomerization between 2-isopropylmalate and 3-isopropylmalate, via the formation of 2-isopropylmaleate. The sequence is that of 3-isopropylmalate dehydratase large subunit from Thermus thermophilus (strain ATCC BAA-163 / DSM 7039 / HB27).